We begin with the raw amino-acid sequence, 689 residues long: Solute carrier organic anion transporter family member 1B2 (689 aa).

The Cytoplasmic portion of the chain corresponds to M1 to R26. A helical membrane pass occupies residues I27–M46. Over K47–G65 the chain is Extracellular. A helical transmembrane segment spans residues L66 to G86. Topologically, residues S87–P92 are cytoplasmic. The chain crosses the membrane as a helical span at residues K93 to G117. Residues Y118–S163 lie on the Extracellular side of the membrane. Residues N132 and N140 are each glycosylated (N-linked (GlcNAc...) asparagine). Residues Y164–D192 form a helical membrane-spanning segment. The Cytoplasmic segment spans residues D193 to A211. Residues M212 to V232 form a helical membrane-spanning segment. Topologically, residues G233–V250 are extracellular. A helical transmembrane segment spans residues G251–P275. Over K276–S326 the chain is Cytoplasmic. 2 positions are modified to phosphoserine: S288 and S290. Residues I327–I348 form a helical membrane-spanning segment. Topologically, residues G349–Q368 are extracellular. A helical membrane pass occupies residues A369–I392. Topologically, residues K393–K396 are cytoplasmic. A helical transmembrane segment spans residues L397–Y420. Residues F421–Y533 are Extracellular-facing. Residues D448–S505 enclose the Kazal-like domain. Cystine bridges form between C454–C484, C460–C480, and C469–C503. N-linked (GlcNAc...) asparagine glycosylation occurs at N513. The helical transmembrane segment at I534–I556 threads the bilayer. Residues R557 to S565 lie on the Cytoplasmic side of the membrane. The chain crosses the membrane as a helical span at residues L566 to I591. The Extracellular segment spans residues D592–S625. Residues I626–M643 traverse the membrane as a helical segment. Over K644 to L689 the chain is Cytoplasmic. Residues G658–L689 form a disordered region. Position 662 is a phosphothreonine (T662). S680 carries the phosphoserine modification. Residues S680–L689 are compositionally biased toward basic and acidic residues.

The protein belongs to the organo anion transporter (TC 2.A.60) family. In terms of tissue distribution, liver specific.

It localises to the cell membrane. The enzyme catalyses estrone 3-sulfate(out) = estrone 3-sulfate(in). The catalysed reaction is taurocholate(out) = taurocholate(in). It catalyses the reaction prostaglandin E2(out) = prostaglandin E2(in). It carries out the reaction L-thyroxine(out) = L-thyroxine(in). In terms of biological role, mediates the Na(+)-independent uptake of organic anions such as taurochlate, bromosulfophthalein and steroid conjugates (estrone 3-sulfate, 17-beta-glucuronosyl estradiol, dehydroepiandrosterone sulfate). Also transports prostaglandin E2 and L-thyroxine (T4). Shows a pH-sensitive substrate specificity which may be ascribed to the protonation state of the binding site and leads to a stimulation of substrate transport in an acidic microenvironment. Hydrogencarbonate/HCO3(-) acts as the probable counteranion that exchanges for organic anions. The protein is Solute carrier organic anion transporter family member 1B2 (Slco1b2) of Mus musculus (Mouse).